The sequence spans 191 residues: Prophage tail fiber assembly protein homolog TfaR (191 aa).

The protein belongs to the tfa family.

The polypeptide is Prophage tail fiber assembly protein homolog TfaR (tfaR) (Escherichia coli (strain K12)).